Consider the following 411-residue polypeptide: Ribose-phosphate pyrophosphokinase 3, chloroplastic (411 aa).

The N-terminal 39 residues, 1–39 (MAAISPANATTAASLSLPQFSSTSSSLSSSSSPSFLNFK), are a transit peptide targeting the chloroplast. Residues Asp-231 and His-233 each contribute to the Mg(2+) site. The tract at residues 314 to 329 (GRHVVIVDDLVQSGGT) is binding of phosphoribosylpyrophosphate.

The protein belongs to the ribose-phosphate pyrophosphokinase family.

The protein localises to the plastid. Its subcellular location is the chloroplast. It carries out the reaction D-ribose 5-phosphate + ATP = 5-phospho-alpha-D-ribose 1-diphosphate + AMP + H(+). In Arabidopsis thaliana (Mouse-ear cress), this protein is Ribose-phosphate pyrophosphokinase 3, chloroplastic (PRS3).